We begin with the raw amino-acid sequence, 867 residues long: Prominin-1 (867 aa).

The first 19 residues, 1 to 19 (MALVFSALLLLGLCGKISS), serve as a signal peptide directing secretion. Over 20–107 (EGQPAFHNTP…VLALKIALYE (88 aa)) the chain is Extracellular. A helical membrane pass occupies residues 108–128 (IGVLICAILGLLFIILMPLVG). The Cytoplasmic segment spans residues 129–158 (CFFCMCRCCNKCGGEMHQRQKQNAPCRRKC). A helical transmembrane segment spans residues 159–179 (LGLSLLVICLLMSLGIIYGFV). Over 180-434 (ANQQTRTRIK…LPKLEEYDSY (255 aa)) the chain is Extracellular. N6-acetyllysine occurs at positions 226, 258, and 265. N-linked (GlcNAc...) asparagine glycans are attached at residues Asn273, Asn291, Asn332, Asn374, and Asn415. A helical transmembrane segment spans residues 435–455 (WWLGGLIVCFLLTLIVTFFFL). Residues 456-487 (GLLCGVFGYDKHATPTRRGCVSNTGGIFLMAG) lie on the Cytoplasmic side of the membrane. The helical transmembrane segment at 488–508 (VGFGFLFCWILMILVVLTFVV) threads the bilayer. Residues 509-794 (GANVEKLLCE…LCGYVADPLN (286 aa)) lie on the Extracellular side of the membrane. N-linked (GlcNAc...) asparagine glycans are attached at residues Asn554, Asn581, and Asn732. The helical transmembrane segment at 795 to 815 (LFWFGIGKATVLLLPAVIIAI) threads the bilayer. At 816–867 (KLAKYYRRMDSEDVYDDVETVPMKNLEIGSNGYHKDHLYGVHNPVMTSPSRY) the chain is on the cytoplasmic side. Ser865 carries the post-translational modification Phosphoserine.

This sequence belongs to the prominin family. Interacts with CDHR1 and with actin filaments. Interacts with NAT8 and NAT8B. In terms of processing, acetylation at Lys-226, Lys-258 and Lys-265 by NAT8 and NAT8B may control PROM1 protein expression and its function in cell apoptosis. In the submandibular gland, expressed on the apical side of epithelial cells. In the parotid gland, expressed in the intercalated ducts. In the sublingual gland, expressed in intercalated ducts. In the extraorbital lacrimal gland, expressed in the intercalated tubules and larger intralobular ducts. Expressed in the retina. Present in urine within small membrane particles (at protein level). In the embryo, expressed on the apical side of neuroepithelial cells and of other epithelia such as lung buds, gut and ureter buds. In the adult, expressed at the apical side of the kidney tubules and of the ependymal layer of the brain. Not expressed in gut, liver, lung, pituitary, adrenal, heart or spleen. Localized to the nascent disk membranes at the base of the rod outer segment in the retina (at protein level).

It is found in the apical cell membrane. Its subcellular location is the cell projection. The protein resides in the microvillus membrane. It localises to the cilium. The protein localises to the photoreceptor outer segment. It is found in the endoplasmic reticulum. Its subcellular location is the endoplasmic reticulum-Golgi intermediate compartment. Its function is as follows. May play a role in cell differentiation, proliferation and apoptosis. Binds cholesterol in cholesterol-containing plasma membrane microdomains and may play a role in the organization of the apical plasma membrane in epithelial cells. During early retinal development acts as a key regulator of disk morphogenesis. Involved in regulation of MAPK and Akt signaling pathways. In neuroblastoma cells suppresses cell differentiation such as neurite outgrowth in a RET-dependent manner. The sequence is that of Prominin-1 (Prom1) from Mus musculus (Mouse).